The chain runs to 319 residues: Plasmodesmata-located protein 4 (319 aa).

A signal peptide spans 1–26; sequence MVVHLISLLTQTLALIILSLPSIINT. Topologically, residues 27–288 are extracellular; it reads SQLDYDTLVF…EGSKVNTGKS (262 aa). Disulfide bonds link Cys39–Cys127, Cys103–Cys112, Cys115–Cys140, Cys177–Cys247, Cys223–Cys232, and Cys235–Cys260. Gnk2-homologous domains lie at 45–149 and 170–269; these read NILQ…FERI and HGLI…YHPH. A helical membrane pass occupies residues 289–309; that stretch reads LAIVVGGVAALVFVAIFFMFL. The segment at 289–309 is necessary and sufficient for plasmodesmal targeting; it reads LAIVVGGVAALVFVAIFFMFL. Topologically, residues 310 to 319 are cytoplasmic; the sequence is KSLRKKGDDC.

It belongs to the cysteine-rich repeat secretory protein family. Plasmodesmata-located proteins (PDLD) subfamily. (Microbial infection) Interacts with Grapevine fanleaf virus (GFLV) 2B-MP. Highly expressed in seeds and roots.

The protein localises to the cell membrane. Its subcellular location is the cell junction. It is found in the plasmodesma. Functionally, modulates cell-to-cell trafficking. The protein is Plasmodesmata-located protein 4 of Arabidopsis thaliana (Mouse-ear cress).